The primary structure comprises 68 residues: U1-hexatoxin-Hv1a (68 aa).

5 cysteine pairs are disulfide-bonded: C3/C14, C8/C22, C13/C48, C32/C56, and C50/C63.

The protein belongs to the MIT-like AcTx family. Expressed by the venom gland.

The protein resides in the secreted. The protein is U1-hexatoxin-Hv1a of Hadronyche versuta (Blue mountains funnel-web spider).